Consider the following 336-residue polypeptide: Calcium uniporter regulatory subunit MCUb, mitochondrial (336 aa).

Residues 1–35 constitute a mitochondrion transit peptide; the sequence is MLQRGLWPWRTRLLPTPGTWRPARPWPLPPPPQVL. Positions 179–210 form a coiled coil; it reads ESQKKREHHLLEKIDHLKEQLQPLEQVKAGIE. Helical transmembrane passes span 220–240 and 250–270; these read LLWA…WLTW and PVTY…FIVT. The stretch at 297 to 323 forms a coiled coil; sequence FDVQQYNKLKEDLAKAKESLKQARHSL.

The protein belongs to the MCU (TC 1.A.77) family. In terms of assembly, homooligomer. Associates with the uniplex complex, composed of MCU, MICU1, MICU2 and EMRE/SMDT1, inhibiting its activity.

The protein localises to the mitochondrion inner membrane. Functionally, negative regulator of the mitochondrial calcium uniporter (MCU), a channel that mediates calcium uptake into the mitochondrial matrix. MCUB is required to limit mitochondrial calcium overload during stress. Acts as a dominant-negative regulator that displaces MCU from the functional uniplex complex and thereby decreases the association of calcium sensors MICU1 and MICU2, preventing channel gating. Mitochondrial calcium homeostasis plays key roles in mitochondrial metabolism. Acts as an important regulator of mitochondrial metabolism in response to stress in muscle cells: induced in response to fasting, leading to restrict mitochondrial calcium uptake, resulting in reprogramming of mitochondria toward fatty acid oxidation preference. Acts as a regulator of macrophage polarization during skeletal muscle regeneration: inhibition of mitochondrial calcium uptake drives differentiation of macrophages with anti-inflammatory profile, promoting the differentiation and fusion of satellite cells. This chain is Calcium uniporter regulatory subunit MCUb, mitochondrial, found in Homo sapiens (Human).